We begin with the raw amino-acid sequence, 646 residues long: RNase E specificity factor CsrD (646 aa).

2 helical membrane passes run F10–F30 and M135–V155. The segment at F152–L219 is HAMP-like. Residues R194–A224 are a coiled coil. In terms of domain architecture, GGDEF spans T254–D387. Positions N396–Y644 constitute an EAL domain.

It is found in the cell membrane. Functionally, serves as a specificity factor required for RNase E-mediated decay of the small global regulatory RNAs CsrB and CsrC, it is probably not a nuclease. Nor does its activity involve c-di-GMP, despite its domain composition. Positively modulates motility gene expression, is also required for curli expression. The chain is RNase E specificity factor CsrD (csrD) from Escherichia coli (strain K12).